We begin with the raw amino-acid sequence, 369 residues long: Glycolate oxidase 1 (369 aa).

Residues 1–360 (MGEITNVMEY…TRKHIITESD (360 aa)) enclose the FMN hydroxy acid dehydrogenase domain. Tyrosine 25 provides a ligand contact to glyoxylate. Residues 78–80 (PTA), serine 107, 128–130 (QLY), and threonine 156 each bind FMN. Glyoxylate is bound at residue tyrosine 130. Residue arginine 165 coordinates glyoxylate. 2 residues coordinate FMN: lysine 231 and serine 253. Glyoxylate is bound by residues histidine 255 and arginine 258. Histidine 255 serves as the catalytic Proton acceptor. Residues 286–290 (DGGVR) and 309–310 (GR) each bind FMN.

Belongs to the FMN-dependent alpha-hydroxy acid dehydrogenase family. As to quaternary structure, homotetramer. It depends on FMN as a cofactor.

Its subcellular location is the peroxisome. It carries out the reaction glycolate + O2 = glyoxylate + H2O2. It functions in the pathway photosynthesis; photorespiration; glycine from 2-phosphoglycolate: step 2/3. In terms of biological role, catalyzes the oxidation of glycolate to glyoxylate, with a reduction of O2 to H2O2. Is an essential enzyme in photorespiration in plants. Photorespiration plays a vital role in C4 photosynthesis in Z.mays and is essential for maize seedling development and maintaining low (non-toxic) levels of glycolate. The chain is Glycolate oxidase 1 from Zea mays (Maize).